The sequence spans 111 residues: Large ribosomal subunit protein uL22 (111 aa).

This sequence belongs to the universal ribosomal protein uL22 family. Part of the 50S ribosomal subunit.

This protein binds specifically to 23S rRNA; its binding is stimulated by other ribosomal proteins, e.g. L4, L17, and L20. It is important during the early stages of 50S assembly. It makes multiple contacts with different domains of the 23S rRNA in the assembled 50S subunit and ribosome. Functionally, the globular domain of the protein is located near the polypeptide exit tunnel on the outside of the subunit, while an extended beta-hairpin is found that lines the wall of the exit tunnel in the center of the 70S ribosome. This Fusobacterium nucleatum subsp. nucleatum (strain ATCC 25586 / DSM 15643 / BCRC 10681 / CIP 101130 / JCM 8532 / KCTC 2640 / LMG 13131 / VPI 4355) protein is Large ribosomal subunit protein uL22.